The primary structure comprises 530 residues: Cytochrome P450 monooxygenase aneG (530 aa).

N-linked (GlcNAc...) asparagine glycosylation is present at asparagine 2. Residues 43–63 (WLSILGFTIGCYYVIYTFYAL) traverse the membrane as a helical segment. A glycan (N-linked (GlcNAc...) asparagine) is linked at asparagine 92. Residue cysteine 474 coordinates heme.

It belongs to the cytochrome P450 family. Heme serves as cofactor.

Its subcellular location is the membrane. It catalyses the reaction asperaculane E + reduced [NADPH--hemoprotein reductase] + O2 = asperaculane G + oxidized [NADPH--hemoprotein reductase] + H2O + H(+). The catalysed reaction is asperaculane G + reduced [NADPH--hemoprotein reductase] + O2 = aculene D + oxidized [NADPH--hemoprotein reductase] + CO2 + 2 H2O. It carries out the reaction asperaculane E + 2 reduced [NADPH--hemoprotein reductase] + 2 O2 = aculene D + 2 oxidized [NADPH--hemoprotein reductase] + CO2 + 3 H2O + H(+). It functions in the pathway secondary metabolite biosynthesis. Its function is as follows. Cytochrome P450 monooxygenase; part of the gene cluster that mediates the biosynthesis of aculenes, a unique type of norsesquiterpenes that contain a nordaucane skeleton linked to an L-proline moiety and are of mixed biosynthetic origin. The pathway begins with the synthesis of dauca-4,7-diene by the terpene cyclase aneC using farnesyl pyrophosphate (FPP) as substrate. The cytochrome P450 monooxygenase aneF then performs the initial oxidation at C-12 of dauca-4,7-diene to yield asperaculane D. Asperaculane D is substrate of the cytochrome P450 monooxygenase aneD for C-10 hydroxylation to yield asperaculane E. The cytochrome P450 monooxygenase aneG then converts asperaculane E into aculene D via C-2 oxidation. The monomodular nonribosomal peptide synthtase aneB adenylates L-proline and the thiohydrolase aneE transfers this activated L-proline derivative to aculenes D and C to produce respectively aculenes B and A. The dioxygenase aneA converts aculene D into aculene C, and aculene B into aculene A by introducing the 5,6-alkene moiety. Asperculanes A, B, C and F, as well as 14-prolyl asperculane C, might be shunt products of the pathway. The sequence is that of Cytochrome P450 monooxygenase aneG from Aspergillus aculeatus (strain ATCC 16872 / CBS 172.66 / WB 5094).